Reading from the N-terminus, the 284-residue chain is MSALNDKSVDNGRIARRFAALKAEGRAGLVTFITAGDPDLETCRAVLHGLPAAGADLIELGLPFSDPMADGPAIQAASLRALHAGTTARKTLDLVRGFRETDADTPVILMGYYNPIHAYGVDRFLADAIEAGVDGLIVVDLPPEEDEELCIPALKAGVNFIRLATPTTDDKRLPAVLQNTSGFVYYVSIAGITGAASADNAAVGAAVERLKRHTDLPVAVGFGIKTPEQAAEVARVADAAVVGSAIVTRLAGGLDADGKARPGLAEDVLGFVRELAGGVRGAAF.

Catalysis depends on proton acceptor residues E59 and D70.

This sequence belongs to the TrpA family. Tetramer of two alpha and two beta chains.

The catalysed reaction is (1S,2R)-1-C-(indol-3-yl)glycerol 3-phosphate + L-serine = D-glyceraldehyde 3-phosphate + L-tryptophan + H2O. It participates in amino-acid biosynthesis; L-tryptophan biosynthesis; L-tryptophan from chorismate: step 5/5. The alpha subunit is responsible for the aldol cleavage of indoleglycerol phosphate to indole and glyceraldehyde 3-phosphate. The protein is Tryptophan synthase alpha chain of Azospirillum brasilense.